The sequence spans 522 residues: Anti-sigma-I factor RsgI4 (522 aa).

Residues 1–51 (MNLGVVIKIKRKKAIIVTETGEFKAVNARNGMFLGQKILFDQQDVIENNRN) lie on the Cytoplasmic side of the membrane. In terms of domain architecture, RsgI N-terminal anti-sigma spans 2-49 (NLGVVIKIKRKKAIIVTETGEFKAVNARNGMFLGQKILFDQQDVIENN). Residues 52–72 (GIGLAYSAAIAGMVAVFVFMF) traverse the membrane as a helical segment. Residues 73 to 522 (TYFGLHNFNG…SGILKWGREP (450 aa)) lie on the Extracellular side of the membrane. The segment covering 311–361 (SAKTPERATTVPVNTPVKPTDAPTKSPATATATATRAPVKATATPAKTLKP) has biased composition (low complexity). The segment at 311–371 (SAKTPERATT…SDTPVKTPDG (61 aa)) is disordered. The 152-residue stretch at 371-522 (GEQSVKVRFY…SGILKWGREP (152 aa)) folds into the CBM3 domain.

Interacts (via RsgI N-terminal anti-sigma domain) with SigI4.

Its subcellular location is the cell membrane. Its function is as follows. Anti-sigma factor for SigI4. Negatively regulates SigI4 activity through direct interaction. Binding of the polysaccharide substrate to the extracellular C-terminal sensing domain of RsgI4 may induce a conformational change in its N-terminal cytoplasmic region, leading to the release and activation of SigI4. This chain is Anti-sigma-I factor RsgI4, found in Acetivibrio thermocellus (strain ATCC 27405 / DSM 1237 / JCM 9322 / NBRC 103400 / NCIMB 10682 / NRRL B-4536 / VPI 7372) (Clostridium thermocellum).